We begin with the raw amino-acid sequence, 914 residues long: Inter-alpha-trypsin inhibitor heavy chain H1 (914 aa).

Residues 1–30 form the signal peptide; sequence MDGAAVGLRVLLGLGLVSLLTLEAMPAAWG. The propeptide occupies 31–36; it reads LATTGR. Positions 39-168 constitute a VIT domain; it reads AREKRQAVDT…KATFQLTYEE (130 aa). C62 carries an S-linked (Hex...) cysteine glycan. The residue at position 131 (S131) is a Phosphoserine. 2 N-linked (GlcNAc...) asparagine glycosylation sites follow: N288 and N291. The VWFA domain maps to 293 to 453; that stretch reads SKNLVFVIDI…FNFLEVMSME (161 aa). 2 positions are modified to phosphothreonine: T405 and T410. An N-linked (GlcNAc...) asparagine glycan is attached at N591. T656 is a glycosylation site (O-linked (GalNAc...) threonine). The residue at position 675 (D675) is an Aspartate 1-(chondroitin 4-sulfate)-ester. Residues 676–914 constitute a propeptide that is removed on maturation; the sequence is PHFIIYVPQK…HTDYIVPDIF (239 aa).

Belongs to the ITIH family. In terms of assembly, I-alpha-I plasma protease inhibitors are assembled from one or two heavy chains (HC) and one light chain, bikunin. Inter-alpha-inhibitor (I-alpha-I) is composed of ITIH1/HC1, ITIH2/HC2 and bikunin. Interacts with TNFAIP6 (via Link and CUB domains). Post-translationally, heavy chains are linked to bikunin via chondroitin 4-sulfate esterified to the alpha-carboxyl of the C-terminal aspartate after propeptide cleavage. In terms of processing, the S-linked glycan is composed of two 6-carbon sugars, possibly Glc or Gal.

The protein localises to the secreted. Its function is as follows. May act as a carrier of hyaluronan in serum or as a binding protein between hyaluronan and other matrix protein, including those on cell surfaces in tissues to regulate the localization, synthesis and degradation of hyaluronan which are essential to cells undergoing biological processes. This chain is Inter-alpha-trypsin inhibitor heavy chain H1 (ITIH1), found in Mesocricetus auratus (Golden hamster).